Reading from the N-terminus, the 372-residue chain is Putative glutamate--cysteine ligase 2 (372 aa).

It belongs to the glutamate--cysteine ligase type 2 family. YbdK subfamily.

The enzyme catalyses L-cysteine + L-glutamate + ATP = gamma-L-glutamyl-L-cysteine + ADP + phosphate + H(+). ATP-dependent carboxylate-amine ligase which exhibits weak glutamate--cysteine ligase activity. The polypeptide is Putative glutamate--cysteine ligase 2 (Cupriavidus metallidurans (strain ATCC 43123 / DSM 2839 / NBRC 102507 / CH34) (Ralstonia metallidurans)).